Reading from the N-terminus, the 398-residue chain is MYPVEYPPPLYSSCKHILSLTAKQLKTKAFVVFSASLSLIIGLITGCCLLFASPPAFITSGICLALLVSVISFFGCRKLIPYGIQRLISYTKSLPALSDSLIDFLKTESTSISSLLPDPKLKNCFKGTSSEYKKFFFDHPETLLSSAFMDWTPQIGPSAPQQTKTIVLSHYCLPFSLTLSTLDFETLHTYIVKSNKLRCHVGYAHQLPPANPVIRQARQGVLQQLYNTGTETFFIPIQESALLQQEELFKTLFRHYVQIIERNLSSRVLLLEPLKTPVHTHKARTLESLALFCALEYLCYTTLGDWGTKELDPTPPLDYKDFFTILIKKQCPASNMRISSPARPMNATKLTTIVLSGLEEEDKLGLLGQMQPFLFTAEIAHPQRFEATLIQNVLDDIA.

Transmembrane regions (helical) follow at residues 31–51 (VVFSASLSLIIGLITGCCLLF) and 56–76 (AFITSGICLALLVSVISFFGC).

This sequence belongs to the chlamydial CPn_0129/CT_036/TC_0306 family.

It localises to the cell membrane. This is an uncharacterized protein from Chlamydia muridarum (strain MoPn / Nigg).